The sequence spans 185 residues: Ribosome-recycling factor (185 aa).

It belongs to the RRF family.

It localises to the cytoplasm. Its function is as follows. Responsible for the release of ribosomes from messenger RNA at the termination of protein biosynthesis. May increase the efficiency of translation by recycling ribosomes from one round of translation to another. The polypeptide is Ribosome-recycling factor (Xanthomonas campestris pv. campestris (strain 8004)).